The following is a 295-amino-acid chain: Acetylglutamate kinase (295 aa).

Substrate is bound by residues 61–62, R83, and N187; that span reads GG.

Belongs to the acetylglutamate kinase family. ArgB subfamily.

It localises to the cytoplasm. It catalyses the reaction N-acetyl-L-glutamate + ATP = N-acetyl-L-glutamyl 5-phosphate + ADP. The protein operates within amino-acid biosynthesis; L-arginine biosynthesis; N(2)-acetyl-L-ornithine from L-glutamate: step 2/4. Functionally, catalyzes the ATP-dependent phosphorylation of N-acetyl-L-glutamate. In Methanocorpusculum labreanum (strain ATCC 43576 / DSM 4855 / Z), this protein is Acetylglutamate kinase.